The chain runs to 578 residues: Proline--tRNA ligase (578 aa).

The protein belongs to the class-II aminoacyl-tRNA synthetase family. ProS type 1 subfamily. As to quaternary structure, homodimer.

It localises to the cytoplasm. The enzyme catalyses tRNA(Pro) + L-proline + ATP = L-prolyl-tRNA(Pro) + AMP + diphosphate. Catalyzes the attachment of proline to tRNA(Pro) in a two-step reaction: proline is first activated by ATP to form Pro-AMP and then transferred to the acceptor end of tRNA(Pro). As ProRS can inadvertently accommodate and process non-cognate amino acids such as alanine and cysteine, to avoid such errors it has two additional distinct editing activities against alanine. One activity is designated as 'pretransfer' editing and involves the tRNA(Pro)-independent hydrolysis of activated Ala-AMP. The other activity is designated 'posttransfer' editing and involves deacylation of mischarged Ala-tRNA(Pro). The misacylated Cys-tRNA(Pro) is not edited by ProRS. The chain is Proline--tRNA ligase from Burkholderia ambifaria (strain MC40-6).